The following is a 307-amino-acid chain: Methionyl-tRNA formyltransferase (307 aa).

108–111 (SLLP) is a binding site for (6S)-5,6,7,8-tetrahydrofolate.

This sequence belongs to the Fmt family.

It catalyses the reaction L-methionyl-tRNA(fMet) + (6R)-10-formyltetrahydrofolate = N-formyl-L-methionyl-tRNA(fMet) + (6S)-5,6,7,8-tetrahydrofolate + H(+). In terms of biological role, attaches a formyl group to the free amino group of methionyl-tRNA(fMet). The formyl group appears to play a dual role in the initiator identity of N-formylmethionyl-tRNA by promoting its recognition by IF2 and preventing the misappropriation of this tRNA by the elongation apparatus. The protein is Methionyl-tRNA formyltransferase of Xanthomonas oryzae pv. oryzae (strain MAFF 311018).